Reading from the N-terminus, the 324-residue chain is MYG1 protein C694.04c (324 aa).

Belongs to the MYG1 family.

This chain is MYG1 protein C694.04c, found in Schizosaccharomyces pombe (strain 972 / ATCC 24843) (Fission yeast).